The primary structure comprises 520 residues: GMP synthase [glutamine-hydrolyzing] (520 aa).

The Glutamine amidotransferase type-1 domain maps to 9 to 202; it reads SVLIVDFGSQ…IHNVAGIKGD (194 aa). Cysteine 86 functions as the Nucleophile in the catalytic mechanism. Residues histidine 176 and glutamate 178 contribute to the active site. The 193-residue stretch at 203 to 395 folds into the GMPS ATP-PPase domain; the sequence is WSMSAYRQKA…LGLPDSFIGR (193 aa). 230–236 serves as a coordination point for ATP; the sequence is SGGVDSS.

As to quaternary structure, homodimer.

It carries out the reaction XMP + L-glutamine + ATP + H2O = GMP + L-glutamate + AMP + diphosphate + 2 H(+). It participates in purine metabolism; GMP biosynthesis; GMP from XMP (L-Gln route): step 1/1. Functionally, catalyzes the synthesis of GMP from XMP. This chain is GMP synthase [glutamine-hydrolyzing], found in Rhizobium etli (strain ATCC 51251 / DSM 11541 / JCM 21823 / NBRC 15573 / CFN 42).